The primary structure comprises 78 residues: Short neurotoxin SNTX6 (78 aa).

The N-terminal stretch at 1–21 (MKTLLLTFLVVTIVCLDLGYT) is a signal peptide. Disulfide bonds link cysteine 24/cysteine 40, cysteine 33/cysteine 58, cysteine 62/cysteine 70, and cysteine 71/cysteine 76.

This sequence belongs to the three-finger toxin family. Short-chain subfamily. As to expression, expressed by the venom gland.

It is found in the secreted. Its function is as follows. This three-finger toxin binds and inhibits the nicotinic acetylcholine receptor (nAChR). The polypeptide is Short neurotoxin SNTX6 (Ophiophagus hannah (King cobra)).